A 345-amino-acid chain; its full sequence is Phosphoribosylformylglycinamidine cyclo-ligase (345 aa).

The protein belongs to the AIR synthase family.

The protein localises to the cytoplasm. The enzyme catalyses 2-formamido-N(1)-(5-O-phospho-beta-D-ribosyl)acetamidine + ATP = 5-amino-1-(5-phospho-beta-D-ribosyl)imidazole + ADP + phosphate + H(+). The protein operates within purine metabolism; IMP biosynthesis via de novo pathway; 5-amino-1-(5-phospho-D-ribosyl)imidazole from N(2)-formyl-N(1)-(5-phospho-D-ribosyl)glycinamide: step 2/2. The chain is Phosphoribosylformylglycinamidine cyclo-ligase from Pasteurella multocida (strain Pm70).